Here is a 127-residue protein sequence, read N- to C-terminus: Protein ApaG (127 aa).

In terms of domain architecture, ApaG spans asparagine 3–histidine 127.

This is Protein ApaG from Nitrosomonas europaea (strain ATCC 19718 / CIP 103999 / KCTC 2705 / NBRC 14298).